Here is a 145-residue protein sequence, read N- to C-terminus: Probable low molecular weight protein-tyrosine-phosphatase EpsP (145 aa).

The Nucleophile role is filled by C9. The active site involves R15. D114 (proton donor) is an active-site residue.

It belongs to the low molecular weight phosphotyrosine protein phosphatase family.

The enzyme catalyses O-phospho-L-tyrosyl-[protein] + H2O = L-tyrosyl-[protein] + phosphate. Its pathway is glycan metabolism; exopolysaccharide biosynthesis. Its function is as follows. May be involved in assembly or function of the EPS I polymerization/export complex and/or the EpsB ATPase. Alternatively it may function in the removal of the terminal phosphate from C55-isoprenyl pyrophosphate in order to recycle the C55-isoprenyl phosphate lipid carrier used in the synthesis of polysaccharide repeat units. The chain is Probable low molecular weight protein-tyrosine-phosphatase EpsP (epsP) from Ralstonia solanacearum (Pseudomonas solanacearum).